Consider the following 1234-residue polypeptide: MVHPVRVGKRTRMSFSRLKEIGHMPNLIEVQLDSYNWFLKEGLQEVFEDINPIQDYTANLNLEFVGYKLDMDNIKYSVEECKERDSTYAAPLKVKVRLLNKETGEVKEQEVFMGDFPLMTEQGTFIINGAERVIVSQLVRSPGVYYDVSVDKTGKNLFSSTVIPNRGAWLEYETDSNNIIYVRIDKTRKLPITILVRAMGHGTDTEITNFFGEDERLKATIEKDNTKTHEEALLEIYKRLRPGEPPTVDSARSLIESLFFDPKRYDLSRVGRYKFNKKLSLHLRIVNQISTGDVVNPETGEILVQKGEKIDREKAVQIQQCGINSVDIEIEDTTLRVIGNNFVNINNFIDFNIDDLNIKESVYYPALKQILDNYSSEESIREQIKKNIHNLIPKHIIRDDIYATVSYELGLAYGVGHTDDIDHLGNRRLRSVGELLQNQFRIGLSRMERVVKERMTIQDQEVITPQALINIRPVAASIKEFFGSSQLSQFMDQTNPLSELTHKRRLSALGPGGLSRERAGFEVRDVHHSHYGRMCPIETPEGPNIGLINSLATYAKVNEYGFIETPYRKVNKKEKIVTNEIVYMTADEEDEYLIGRANEPIDENGKFVDSKITVRDKEDVIVVPAEDVDYMDLSPRQLVSVATAMIPFLENDDASRALMGSNMQRQAVPLLKPQAPVVGTGIEYKAAVDSGVLPKARNAGVVSYVCANEIRVRRDSDGGTDIYRLLKFQRSNQGTCINQRPIVEKGEIVQQGTVLADGPSTDLGEIALGKNIRMGFTTWEGYNYEDAMLISEELVKKDVFTSIHIEEYESEARDTKLGPEEITRDIPNVGEDALKDIDDRGIIKIGAEVRAGDILVGKVTPKGETELTAEERLLRAIFGEKAREVRDTSLRVPHGEAGIIVDVKVFTRKNGDELSPGVNKLVRCYIAQKRKISVGDKMAGRHGNKGVISRVLPEEDMPFLPDGRPLEICLNPLGVPSRMNIGQVLEVHLGWAASELGWHIATPVFDGATEEDIIECLKKAGYREDGKTILYDGRTGEPFNRPVTVGYMYILKLAHLVDDKIHARSTGPYSLVTQQPLGGKAQFGGQRFGEMEVWALEAYGAAHTLQEILTVKSDDVVGRVKTYEAIVKGENIPEPGVPESFKVLIKELQALCLDVKVLNDDNQEIKLKESVDEEIENLDVNIEGNEDFVLSSQDNDYEEPEENDEEDELNLDYDDLTLDDLKDDLKIEDFNDEH.

The disordered stretch occupies residues 1189–1212 (VLSSQDNDYEEPEENDEEDELNLD). Acidic residues predominate over residues 1195 to 1212 (NDYEEPEENDEEDELNLD).

The protein belongs to the RNA polymerase beta chain family. In terms of assembly, the RNAP catalytic core consists of 2 alpha, 1 beta, 1 beta' and 1 omega subunit. When a sigma factor is associated with the core the holoenzyme is formed, which can initiate transcription.

It catalyses the reaction RNA(n) + a ribonucleoside 5'-triphosphate = RNA(n+1) + diphosphate. DNA-dependent RNA polymerase catalyzes the transcription of DNA into RNA using the four ribonucleoside triphosphates as substrates. The protein is DNA-directed RNA polymerase subunit beta of Clostridium kluyveri (strain NBRC 12016).